The primary structure comprises 716 residues: Fatty acid oxidation complex subunit alpha (716 aa).

The segment at 1-189 is enoyl-CoA hydratase/isomerase; sequence MIYQSPTIQV…KVGAVDAVVA (189 aa). Residue aspartate 296 participates in substrate binding. The 3-hydroxyacyl-CoA dehydrogenase stretch occupies residues 311–716; the sequence is KDVKSAAVLG…AANNGSYYQA (406 aa). NAD(+) contacts are provided by residues methionine 324, aspartate 343, 400–402, lysine 407, and serine 429; that span reads VVE. Histidine 450 (for 3-hydroxyacyl-CoA dehydrogenase activity) is an active-site residue. Asparagine 453 contacts NAD(+). Residues asparagine 500 and tyrosine 660 each contribute to the substrate site.

In the N-terminal section; belongs to the enoyl-CoA hydratase/isomerase family. It in the C-terminal section; belongs to the 3-hydroxyacyl-CoA dehydrogenase family. Heterotetramer of two alpha chains (FadB) and two beta chains (FadA).

The enzyme catalyses a (3S)-3-hydroxyacyl-CoA + NAD(+) = a 3-oxoacyl-CoA + NADH + H(+). It carries out the reaction a (3S)-3-hydroxyacyl-CoA = a (2E)-enoyl-CoA + H2O. The catalysed reaction is a 4-saturated-(3S)-3-hydroxyacyl-CoA = a (3E)-enoyl-CoA + H2O. It catalyses the reaction (3S)-3-hydroxybutanoyl-CoA = (3R)-3-hydroxybutanoyl-CoA. The enzyme catalyses a (3Z)-enoyl-CoA = a 4-saturated (2E)-enoyl-CoA. It carries out the reaction a (3E)-enoyl-CoA = a 4-saturated (2E)-enoyl-CoA. Its pathway is lipid metabolism; fatty acid beta-oxidation. Functionally, involved in the aerobic and anaerobic degradation of long-chain fatty acids via beta-oxidation cycle. Catalyzes the formation of 3-oxoacyl-CoA from enoyl-CoA via L-3-hydroxyacyl-CoA. It can also use D-3-hydroxyacyl-CoA and cis-3-enoyl-CoA as substrate. The chain is Fatty acid oxidation complex subunit alpha from Shewanella sp. (strain ANA-3).